The chain runs to 307 residues: Auxiliary protein GraX (307 aa).

As to quaternary structure, homodimer. Interacts with GraR and GraS.

Its function is as follows. Plays a role in resistance against cationic antimicrobial peptides (CAMPs). Facilitates the activation of GraS to transduce the signal to GraR. The sequence is that of Auxiliary protein GraX (graX) from Staphylococcus aureus (strain NCTC 8325 / PS 47).